A 461-amino-acid chain; its full sequence is Protein transport protein HofB homolog (461 aa).

222–229 (GPTGSGKT) provides a ligand contact to ATP.

It belongs to the GSP E family.

In Escherichia coli (strain K12), this protein is Protein transport protein HofB homolog (hofB).